Consider the following 342-residue polypeptide: Phosphate acyltransferase (342 aa).

Belongs to the PlsX family. As to quaternary structure, homodimer. Probably interacts with PlsY.

It localises to the cytoplasm. It catalyses the reaction a fatty acyl-[ACP] + phosphate = an acyl phosphate + holo-[ACP]. The protein operates within lipid metabolism; phospholipid metabolism. Functionally, catalyzes the reversible formation of acyl-phosphate (acyl-PO(4)) from acyl-[acyl-carrier-protein] (acyl-ACP). This enzyme utilizes acyl-ACP as fatty acyl donor, but not acyl-CoA. The chain is Phosphate acyltransferase from Trichormus variabilis (strain ATCC 29413 / PCC 7937) (Anabaena variabilis).